The chain runs to 82 residues: Small ribosomal subunit protein bS18 (82 aa).

A disordered region spans residues methionine 1–cysteine 20.

It belongs to the bacterial ribosomal protein bS18 family. Part of the 30S ribosomal subunit. Forms a tight heterodimer with protein bS6.

Binds as a heterodimer with protein bS6 to the central domain of the 16S rRNA, where it helps stabilize the platform of the 30S subunit. The sequence is that of Small ribosomal subunit protein bS18 from Chelativorans sp. (strain BNC1).